Consider the following 340-residue polypeptide: Fructose-1,6-bisphosphatase class 1 (340 aa).

4 residues coordinate Mg(2+): Glu107, Asp126, Leu128, and Asp129. Position 215 (Asn215) interacts with substrate. Position 287 (Glu287) interacts with Mg(2+).

Belongs to the FBPase class 1 family. As to quaternary structure, homotetramer. Requires Mg(2+) as cofactor.

Its subcellular location is the cytoplasm. The enzyme catalyses beta-D-fructose 1,6-bisphosphate + H2O = beta-D-fructose 6-phosphate + phosphate. Its pathway is carbohydrate biosynthesis; gluconeogenesis. This Brucella ovis (strain ATCC 25840 / 63/290 / NCTC 10512) protein is Fructose-1,6-bisphosphatase class 1.